The primary structure comprises 322 residues: Pantothenate kinase (322 aa).

104–111 (GSVAVGKS) serves as a coordination point for ATP.

The protein belongs to the prokaryotic pantothenate kinase family.

The protein resides in the cytoplasm. The catalysed reaction is (R)-pantothenate + ATP = (R)-4'-phosphopantothenate + ADP + H(+). The protein operates within cofactor biosynthesis; coenzyme A biosynthesis; CoA from (R)-pantothenate: step 1/5. This chain is Pantothenate kinase, found in Leifsonia xyli subsp. xyli (strain CTCB07).